The following is a 528-amino-acid chain: PH domain-containing protein DDB_G0267786 (528 aa).

Residues 59–180 enclose the PH domain; it reads SDVFSGYLVK…WIEIFKTCCR (122 aa).

This chain is PH domain-containing protein DDB_G0267786, found in Dictyostelium discoideum (Social amoeba).